Here is a 331-residue protein sequence, read N- to C-terminus: Glycerol-3-phosphate dehydrogenase [NAD(P)+] (331 aa).

Residues Trp13, Arg33, and Lys103 each contribute to the NADPH site. Lys103, Gly131, and Thr133 together coordinate sn-glycerol 3-phosphate. Ala135 provides a ligand contact to NADPH. Sn-glycerol 3-phosphate contacts are provided by Lys187, Asp240, Ser250, Arg251, and Asn252. Lys187 (proton acceptor) is an active-site residue. NADPH is bound at residue Arg251. Residues Val275 and Glu277 each contribute to the NADPH site.

Belongs to the NAD-dependent glycerol-3-phosphate dehydrogenase family.

The protein localises to the cytoplasm. The enzyme catalyses sn-glycerol 3-phosphate + NAD(+) = dihydroxyacetone phosphate + NADH + H(+). It catalyses the reaction sn-glycerol 3-phosphate + NADP(+) = dihydroxyacetone phosphate + NADPH + H(+). The protein operates within membrane lipid metabolism; glycerophospholipid metabolism. Its function is as follows. Catalyzes the reduction of the glycolytic intermediate dihydroxyacetone phosphate (DHAP) to sn-glycerol 3-phosphate (G3P), the key precursor for phospholipid synthesis. The protein is Glycerol-3-phosphate dehydrogenase [NAD(P)+] of Novosphingobium aromaticivorans (strain ATCC 700278 / DSM 12444 / CCUG 56034 / CIP 105152 / NBRC 16084 / F199).